We begin with the raw amino-acid sequence, 334 residues long: Protein-methionine-sulfoxide reductase catalytic subunit MsrP (334 aa).

The segment at residues 1 to 44 is a signal peptide (tat-type signal); the sequence is MKKNQFLKESDVTAESVFFMKRRQVLKALGISAAALSLPHAAHA. Mo-molybdopterin contacts are provided by residues N88, 91–92, C146, T181, N233, R238, and 249–251; these read YE and GIK.

Belongs to the MsrP family. In terms of assembly, heterodimer of a catalytic subunit (MsrP) and a heme-binding subunit (MsrQ). The cofactor is Mo-molybdopterin. Predicted to be exported by the Tat system. The position of the signal peptide cleavage has not been experimentally proven.

The protein localises to the periplasm. The enzyme catalyses L-methionyl-[protein] + a quinone + H2O = L-methionyl-(S)-S-oxide-[protein] + a quinol. The catalysed reaction is L-methionyl-[protein] + a quinone + H2O = L-methionyl-(R)-S-oxide-[protein] + a quinol. Part of the MsrPQ system that repairs oxidized periplasmic proteins containing methionine sulfoxide residues (Met-O), using respiratory chain electrons. Thus protects these proteins from oxidative-stress damage caused by reactive species of oxygen and chlorine generated by the host defense mechanisms. MsrPQ is essential for the maintenance of envelope integrity under bleach stress, rescuing a wide series of structurally unrelated periplasmic proteins from methionine oxidation, including the primary periplasmic chaperone SurA and the lipoprotein Pal. The catalytic subunit MsrP is non-stereospecific, being able to reduce both (R-) and (S-) diastereoisomers of methionine sulfoxide. The chain is Protein-methionine-sulfoxide reductase catalytic subunit MsrP from Escherichia coli O157:H7.